A 492-amino-acid polypeptide reads, in one-letter code: UDP-N-acetylmuramyl-tripeptide synthetase 2 (492 aa).

Serine 30 contacts UDP-N-acetyl-alpha-D-muramoyl-L-alanyl-D-glutamate. 111–117 (GTNGKTT) is a binding site for ATP. UDP-N-acetyl-alpha-D-muramoyl-L-alanyl-D-glutamate-binding positions include 154–155 (TT), serine 181, glutamine 187, and arginine 189. Lysine 221 is subject to N6-carboxylysine.

Belongs to the MurCDEF family. MurE subfamily. In terms of processing, carboxylation is probably crucial for Mg(2+) binding and, consequently, for the gamma-phosphate positioning of ATP.

The protein resides in the cytoplasm. Its pathway is cell wall biogenesis; peptidoglycan biosynthesis. Its function is as follows. Catalyzes the addition of an amino acid to the nucleotide precursor UDP-N-acetylmuramoyl-L-alanyl-D-glutamate (UMAG) in the biosynthesis of bacterial cell-wall peptidoglycan. In Oceanobacillus iheyensis (strain DSM 14371 / CIP 107618 / JCM 11309 / KCTC 3954 / HTE831), this protein is UDP-N-acetylmuramyl-tripeptide synthetase 2.